Here is a 396-residue protein sequence, read N- to C-terminus: Phosphoglycerate kinase (396 aa).

Substrate contacts are provided by residues 21 to 23 (DIN), Arg-36, 59 to 62 (HFGR), Arg-114, and Arg-147. ATP-binding positions include Lys-197, Glu-319, and 349 to 352 (GGDT).

Belongs to the phosphoglycerate kinase family. In terms of assembly, monomer.

The protein resides in the cytoplasm. It catalyses the reaction (2R)-3-phosphoglycerate + ATP = (2R)-3-phospho-glyceroyl phosphate + ADP. It functions in the pathway carbohydrate degradation; glycolysis; pyruvate from D-glyceraldehyde 3-phosphate: step 2/5. In Jannaschia sp. (strain CCS1), this protein is Phosphoglycerate kinase.